A 577-amino-acid chain; its full sequence is Methionine--tRNA ligase, mitochondrial (577 aa).

A 'HIGH' region motif is present at residues 25-37 (PIFYVNAAPHIGH). Residues 329-333 (KMSKS) carry the 'KMSKS' region motif. Lys332 serves as a coordination point for ATP.

This sequence belongs to the class-I aminoacyl-tRNA synthetase family.

The protein localises to the mitochondrion matrix. It catalyses the reaction tRNA(Met) + L-methionine + ATP = L-methionyl-tRNA(Met) + AMP + diphosphate. The sequence is that of Methionine--tRNA ligase, mitochondrial (MSM1) from Candida albicans (Yeast).